Consider the following 314-residue polypeptide: Malate dehydrogenase (314 aa).

Residues 11–16 and Asp-35 contribute to the NAD(+) site; that span reads GSGNIG. Positions 84 and 90 each coordinate substrate. NAD(+) contacts are provided by residues Asn-97 and 120–122; that span reads ITN. Positions 122 and 153 each coordinate substrate. His-177 acts as the Proton acceptor in catalysis.

The protein belongs to the LDH/MDH superfamily. MDH type 3 family.

The catalysed reaction is (S)-malate + NAD(+) = oxaloacetate + NADH + H(+). In terms of biological role, catalyzes the reversible oxidation of malate to oxaloacetate. This Rickettsia bellii (strain OSU 85-389) protein is Malate dehydrogenase.